Here is a 356-residue protein sequence, read N- to C-terminus: Uroporphyrinogen decarboxylase (356 aa).

Residues 27 to 31 (RQAGR), D77, Y154, T209, and H327 each bind substrate.

The protein belongs to the uroporphyrinogen decarboxylase family. In terms of assembly, homodimer.

The protein localises to the cytoplasm. The catalysed reaction is uroporphyrinogen III + 4 H(+) = coproporphyrinogen III + 4 CO2. The protein operates within porphyrin-containing compound metabolism; protoporphyrin-IX biosynthesis; coproporphyrinogen-III from 5-aminolevulinate: step 4/4. Catalyzes the decarboxylation of four acetate groups of uroporphyrinogen-III to yield coproporphyrinogen-III. The protein is Uroporphyrinogen decarboxylase of Hamiltonella defensa subsp. Acyrthosiphon pisum (strain 5AT).